A 37-amino-acid polypeptide reads, in one-letter code: Large ribosomal subunit protein bL36c (37 aa).

It belongs to the bacterial ribosomal protein bL36 family.

The protein localises to the plastid. In Epifagus virginiana (Beechdrops), this protein is Large ribosomal subunit protein bL36c (rpl36).